The sequence spans 815 residues: Probable beta-glucosidase G (815 aa).

The signal sequence occupies residues M1 to G20. N-linked (GlcNAc...) asparagine glycans are attached at residues N40, N58, N229, and N276. D304 is an active-site residue. N-linked (GlcNAc...) asparagine glycosylation is found at N343, N350, N402, N507, N563, N584, N623, N662, and N715.

It belongs to the glycosyl hydrolase 3 family.

Its subcellular location is the secreted. The catalysed reaction is Hydrolysis of terminal, non-reducing beta-D-glucosyl residues with release of beta-D-glucose.. It functions in the pathway glycan metabolism; cellulose degradation. In terms of biological role, beta-glucosidases are one of a number of cellulolytic enzymes involved in the degradation of cellulosic biomass. Catalyzes the last step releasing glucose from the inhibitory cellobiose. This is Probable beta-glucosidase G (bglG) from Aspergillus flavus (strain ATCC 200026 / FGSC A1120 / IAM 13836 / NRRL 3357 / JCM 12722 / SRRC 167).